We begin with the raw amino-acid sequence, 887 residues long: Probable dual specificity protein kinase madd-3 (887 aa).

5 disordered regions span residues 77 to 147 (PIKS…ISAA), 163 to 299 (AQPP…PKAL), 313 to 333 (LPQS…STGG), 347 to 475 (TTIC…KSAA), and 504 to 533 (RKPS…QHQD). The span at 108-118 (PTQNPVQLPLP) shows a compositional bias: low complexity. Residues 121–130 (VSEKPGDKKS) are compositionally biased toward basic and acidic residues. A compositionally biased stretch (polar residues) spans 177–192 (SETNSGSGPVSKQVSG). The span at 217–241 (SSASTRAKAASAVAPEANPAPVPTA) shows a compositional bias: low complexity. Composition is skewed to polar residues over residues 314–332 (PQSS…TSTG) and 356–366 (NVPSTSQPQQG). Positions 367-377 (DNEKRLIEKKL) are enriched in basic and acidic residues. Over residues 407–419 (LSSNLTTTNNNNN) the composition is skewed to low complexity. Positions 439-462 (FSTQAGSGNATTVDDPASTTTSKE) are enriched in polar residues. Positions 551 to 863 (FTIYDTLGEG…LPEALQHRYF (313 aa)) constitute a Protein kinase domain. Residues 557–565 (LGEGTFGKV) and Lys580 each bind ATP. Catalysis depends on Asp677, which acts as the Proton acceptor.

It belongs to the protein kinase superfamily. CMGC Ser/Thr protein kinase family. Lammer subfamily. As to expression, expressed in body wall, vulval and anal depressor muscles.

It localises to the cytoplasm. The protein localises to the nucleus. In terms of biological role, probable dual specificity kinase acting on both serine/threonine and tyrosine-containing substrates. Negatively regulates p38 MAPK signaling to allow for the plasma membrane of body wall muscle cells to form projections, also called muscle arms, that extend and connect the body wall muscles to target motor neurons. Negative regulation of p38 MAPK signaling may in turn modulate the trafficking of the muscle specific receptor eva-1 to the lysosome, to ensure proper display of the eva-1 receptor on the plasma membrane of muscle cells and allow for muscle arm extension towards guidance cues. The protein is Probable dual specificity protein kinase madd-3 of Caenorhabditis elegans.